Reading from the N-terminus, the 318-residue chain is Magnetosome protein MamM (318 aa).

The tract at residues 1-210 (MRKSGCAVCS…FMDAYRGLMD (210 aa)) is transmembrane domain (TMD). 4 helical membrane-spanning segments follow: residues 13–33 (IGWVGLAVSTVLMVMKAFVGL), 39–59 (AMLADAMYSLKDMLNALMVII), 81–101 (FILSMVVSVVFIVLTGYLLVH), and 117–137 (LIVLWAALVSIGVNVGMYFYS). Positions 211–318 (HTAGEAVQNR…DEVMLSKVDN (108 aa)) are C-terminal domain (CTD). Fe cation-binding residues include Asp-249, His-264, His-285, and Glu-289.

Belongs to the cation diffusion facilitator (CDF) transporter (TC 2.A.4) family. Forms homodimers via its C-terminal domain (CTD) in the presence of metal cations. Interacts with MamB via their CTD. Isolated CTD forms homodimers.

The protein resides in the magnetosome membrane. It is found in the cell inner membrane. Functionally, essential for magnetosome formation; required for stable accumulation of MamB. May nucleate iron crystal formation. Probably binds and transports iron. Binds divalent cations, possibly up to 3 Zn(2+) per dimer in vitro, probably iron in vivo. One of 7 genes (mamLQBIEMO) able to induce magnetosome membrane biogenesis; coexpression of mamLQRBIEMO in a deletion of the 17 gene mamAB operon restores magnetosome vesicle formation but not magnetite biosynthesis. This Magnetospirillum gryphiswaldense (strain DSM 6361 / JCM 21280 / NBRC 15271 / MSR-1) protein is Magnetosome protein MamM.